The sequence spans 218 residues: Capsid protein (218 aa).

Met-1 carries the post-translational modification N-acetylmethionine; by host. Low complexity predominate over residues 1-10 (MDKSESTSAG). The segment at 1–30 (MDKSESTSAGRNRRRRPRRGSRSASSSADA) is disordered. The span at 11–21 (RNRRRRPRRGS) shows a compositional bias: basic residues.

The protein belongs to the cucumovirus capsid protein family.

The protein resides in the virion. Capsid protein. Probably binds RNA and plays a role in packaging. This chain is Capsid protein, found in Cucumis sativus (Cucumber).